The chain runs to 581 residues: Proline--tRNA ligase (581 aa).

The protein belongs to the class-II aminoacyl-tRNA synthetase family. ProS type 1 subfamily. As to quaternary structure, homodimer.

The protein localises to the cytoplasm. The enzyme catalyses tRNA(Pro) + L-proline + ATP = L-prolyl-tRNA(Pro) + AMP + diphosphate. Functionally, catalyzes the attachment of proline to tRNA(Pro) in a two-step reaction: proline is first activated by ATP to form Pro-AMP and then transferred to the acceptor end of tRNA(Pro). As ProRS can inadvertently accommodate and process non-cognate amino acids such as alanine and cysteine, to avoid such errors it has two additional distinct editing activities against alanine. One activity is designated as 'pretransfer' editing and involves the tRNA(Pro)-independent hydrolysis of activated Ala-AMP. The other activity is designated 'posttransfer' editing and involves deacylation of mischarged Ala-tRNA(Pro). The misacylated Cys-tRNA(Pro) is not edited by ProRS. This is Proline--tRNA ligase from Leptothrix cholodnii (strain ATCC 51168 / LMG 8142 / SP-6) (Leptothrix discophora (strain SP-6)).